The primary structure comprises 210 residues: Large ribosomal subunit protein uL3 (210 aa).

The segment at 131-165 (GPMSHGSKYHRRVGSMGATTDPGRTFKGKKMPGRM) is disordered.

It belongs to the universal ribosomal protein uL3 family. In terms of assembly, part of the 50S ribosomal subunit. Forms a cluster with proteins L14 and L19.

Functionally, one of the primary rRNA binding proteins, it binds directly near the 3'-end of the 23S rRNA, where it nucleates assembly of the 50S subunit. This Caldanaerobacter subterraneus subsp. tengcongensis (strain DSM 15242 / JCM 11007 / NBRC 100824 / MB4) (Thermoanaerobacter tengcongensis) protein is Large ribosomal subunit protein uL3.